Reading from the N-terminus, the 595-residue chain is DNA primase (595 aa).

The CHC2-type zinc finger occupies 38–62 (CPFHQEKTPSFTVSNSKRFFYCFGC). A Toprim domain is found at 250-332 (NHSILVEGYF…EKKISFIRLP (83 aa)). Residues E256, D300, and D302 each coordinate Mg(2+).

This sequence belongs to the DnaG primase family. As to quaternary structure, monomer. Interacts with DnaB. Zn(2+) is required as a cofactor. Requires Mg(2+) as cofactor.

It catalyses the reaction ssDNA + n NTP = ssDNA/pppN(pN)n-1 hybrid + (n-1) diphosphate.. Its function is as follows. RNA polymerase that catalyzes the synthesis of short RNA molecules used as primers for DNA polymerase during DNA replication. The chain is DNA primase from Rickettsia conorii (strain ATCC VR-613 / Malish 7).